An 840-amino-acid polypeptide reads, in one-letter code: Protein translocase subunit SecA (840 aa).

ATP is bound by residues Gln85, 103 to 107 (GEGKT), and Asp492. A disordered region spans residues 787 to 821 (QRERVAKETGASHGGDSQEIKKKPVKKEPKVGRND). Basic and acidic residues predominate over residues 802-819 (DSQEIKKKPVKKEPKVGR). Cys823, Cys825, Cys834, and Cys835 together coordinate Zn(2+).

This sequence belongs to the SecA family. As to quaternary structure, monomer and homodimer. Part of the essential Sec protein translocation apparatus which comprises SecA, SecYEG and auxiliary proteins SecDF. Other proteins may also be involved. Zn(2+) is required as a cofactor.

The protein resides in the cell membrane. The protein localises to the cytoplasm. It carries out the reaction ATP + H2O + cellular proteinSide 1 = ADP + phosphate + cellular proteinSide 2.. Functionally, part of the Sec protein translocase complex. Interacts with the SecYEG preprotein conducting channel. Has a central role in coupling the hydrolysis of ATP to the transfer of proteins into and across the cell membrane, serving as an ATP-driven molecular motor driving the stepwise translocation of polypeptide chains across the membrane. This Clostridium perfringens (strain SM101 / Type A) protein is Protein translocase subunit SecA.